The chain runs to 114 residues: Large ribosomal subunit protein P2 (114 aa).

Over residues 76 to 91 (PAAAAAAGGGDSSSAA) the composition is skewed to low complexity. The tract at residues 76-114 (PAAAAAAGGGDSSSAAKETKKEEPEEEEEDGDMGLSLFD) is disordered.

The protein belongs to the eukaryotic ribosomal protein P1/P2 family. In terms of assembly, P1 and P2 exist as dimers at the large ribosomal subunit. In terms of processing, phosphorylated.

Functionally, plays an important role in the elongation step of protein synthesis. The polypeptide is Large ribosomal subunit protein P2 (Eimeria tenella (Coccidian parasite)).